The sequence spans 240 residues: TATA-box-binding protein (240 aa).

Residues 21–61 (NTRQVWENQNRDGTKPATTFQSEEDIKRAAPESEKDTSATS) are disordered. The segment covering 44–57 (EDIKRAAPESEKDT) has biased composition (basic and acidic residues). Tandem repeats lie at residues 67–143 (LQNI…ARII) and 157–234 (IQNI…YPVL).

Belongs to the TBP family. As to quaternary structure, binds DNA as monomer. The 1.2 MDa TFIID complex is composed of TATA binding protein (TBP) and the 14 TBP-associated factors. One copy of each TAF1, TAF2, TAF3, TAF7, TAF8, TAF11, TAF13, two copies of each TAF4, TAF5, TAF6, TAF9, TAF10, TAF12, and three copies of TAF14. Interacts with TFC8.

It is found in the nucleus. Functionally, general transcription factor that functions at the core of the DNA-binding general transcription factor complex TFIID. Binding of TFIID to a promoter (with or without TATA element) is the initial step in preinitiation complex (PIC) formation. TFIID plays a key role in the regulation of gene expression by RNA polymerase II through different activities such as transcription activator interaction, core promoter recognition and selectivity, TFIIA and TFIIB interaction, chromatin modification (histone acetylation by TAF1), facilitation of DNA opening and initiation of transcription. This Saccharomyces cerevisiae (strain ATCC 204508 / S288c) (Baker's yeast) protein is TATA-box-binding protein (SPT15).